The chain runs to 70 residues: Small ribosomal subunit protein bS21 (70 aa).

This sequence belongs to the bacterial ribosomal protein bS21 family.

The sequence is that of Small ribosomal subunit protein bS21 from Nitratidesulfovibrio vulgaris (strain ATCC 29579 / DSM 644 / CCUG 34227 / NCIMB 8303 / VKM B-1760 / Hildenborough) (Desulfovibrio vulgaris).